The following is a 256-amino-acid chain: MKKVLAGIVILLLNGCAMDPDLAPSDIEKATTTVDAVEGSTEQDSGLIDMLRRREDPQAGDPAWNPIRPQAKPEHYATATGSLFSSIQAQDLYDDTKPRGIGDIVTVMLEEKTQAKKSASSDLDKSTDLSMDPLVLGGKPLTIGDRDLSYEVANANKFSGTTSADQSNSIKGSISVEVIDVLANGNLMIRGEKWLTLNTGDEYIRVSGTIRPDDISQENTIESTRITNARIQYSGTGNRQDVQEQGWLANFFNVSL.

The first 15 residues, 1-15 (MKKVLAGIVILLLNG), serve as a signal peptide directing secretion. C16 is lipidated: N-palmitoyl cysteine. The S-diacylglycerol cysteine moiety is linked to residue C16.

Belongs to the FlgH family. In terms of assembly, the basal body constitutes a major portion of the flagellar organelle and consists of four rings (L,P,S, and M) mounted on a central rod.

The protein resides in the cell outer membrane. Its subcellular location is the bacterial flagellum basal body. Functionally, assembles around the rod to form the L-ring and probably protects the motor/basal body from shearing forces during rotation. The protein is Flagellar L-ring protein (flgH) of Photobacterium profundum (strain SS9).